Consider the following 634-residue polypeptide: Beta-ketoacyl-[acyl-carrier-protein] synthase FabY (634 aa).

The 469-residue stretch at Glu78 to Ser546 folds into the Ketosynthase family 3 (KS3) domain. Active-site for beta-ketoacyl synthase activity residues include Cys281, His434, and His472.

The protein belongs to the thiolase-like superfamily. Beta-ketoacyl-ACP synthases family. In terms of assembly, homodimer.

It catalyses the reaction malonyl-[ACP] + acetyl-CoA + H(+) = 3-oxobutanoyl-[ACP] + CO2 + CoA. Its pathway is lipid metabolism; fatty acid biosynthesis. Its function is as follows. Involved in the initiation of the fatty acid biosynthesis. Catalyzes the condensation of acetyl coenzyme A (acetyl-CoA) with malonyl-acyl carrier protein (ACP) to make the fatty acid synthesis (FAS) primer beta-acetoacetyl-ACP. It can also use short-chain acyl-CoA as substrates, including butyryl-CoA, and hexanoyl-CoA, but does not use any of the longer chain acyl-CoA substrates. The polypeptide is Beta-ketoacyl-[acyl-carrier-protein] synthase FabY (fabY) (Pseudomonas aeruginosa (strain ATCC 15692 / DSM 22644 / CIP 104116 / JCM 14847 / LMG 12228 / 1C / PRS 101 / PAO1)).